Consider the following 513-residue polypeptide: Histidine ammonia-lyase (513 aa).

The 5-imidazolinone (Ala-Gly) cross-link spans 142 to 144; sequence ASG. A 2,3-didehydroalanine (Ser) modification is found at S143.

Belongs to the PAL/histidase family. In terms of processing, contains an active site 4-methylidene-imidazol-5-one (MIO), which is formed autocatalytically by cyclization and dehydration of residues Ala-Ser-Gly.

Its subcellular location is the cytoplasm. It carries out the reaction L-histidine = trans-urocanate + NH4(+). Its pathway is amino-acid degradation; L-histidine degradation into L-glutamate; N-formimidoyl-L-glutamate from L-histidine: step 1/3. In Roseobacter denitrificans (strain ATCC 33942 / OCh 114) (Erythrobacter sp. (strain OCh 114)), this protein is Histidine ammonia-lyase.